Consider the following 184-residue polypeptide: Potassium-transporting ATPase KdpC subunit (184 aa).

The chain crosses the membrane as a helical span at residues 6–26; that stretch reads TAVLYTIISAVFLGLGYPLIM.

This sequence belongs to the KdpC family. The system is composed of three essential subunits: KdpA, KdpB and KdpC.

Its subcellular location is the cell inner membrane. Part of the high-affinity ATP-driven potassium transport (or Kdp) system, which catalyzes the hydrolysis of ATP coupled with the electrogenic transport of potassium into the cytoplasm. This subunit acts as a catalytic chaperone that increases the ATP-binding affinity of the ATP-hydrolyzing subunit KdpB by the formation of a transient KdpB/KdpC/ATP ternary complex. The polypeptide is Potassium-transporting ATPase KdpC subunit (Acidobacterium capsulatum (strain ATCC 51196 / DSM 11244 / BCRC 80197 / JCM 7670 / NBRC 15755 / NCIMB 13165 / 161)).